Reading from the N-terminus, the 410-residue chain is Tyrosine--tRNA ligase (410 aa).

Y36 contributes to the L-tyrosine binding site. Residues 41–50 (ATADSLTAGH) carry the 'HIGH' region motif. Residues Y169 and Q173 each contribute to the L-tyrosine site. The 'KMSKS' region signature appears at 229–233 (KMGKT). Residue K232 participates in ATP binding. Residues 343 to 409 (IDLITMMIDA…GKKAYHLFRA (67 aa)) enclose the S4 RNA-binding domain.

Belongs to the class-I aminoacyl-tRNA synthetase family. TyrS type 1 subfamily. As to quaternary structure, homodimer.

Its subcellular location is the cytoplasm. The enzyme catalyses tRNA(Tyr) + L-tyrosine + ATP = L-tyrosyl-tRNA(Tyr) + AMP + diphosphate + H(+). Functionally, catalyzes the attachment of tyrosine to tRNA(Tyr) in a two-step reaction: tyrosine is first activated by ATP to form Tyr-AMP and then transferred to the acceptor end of tRNA(Tyr). This chain is Tyrosine--tRNA ligase, found in Lachnoclostridium phytofermentans (strain ATCC 700394 / DSM 18823 / ISDg) (Clostridium phytofermentans).